A 767-amino-acid chain; its full sequence is Transferrin receptor protein 1 (767 aa).

Topologically, residues 1–67 are cytoplasmic; sequence MDQARSAFSN…LTKPKRFNGS (67 aa). A phosphoserine mark is found at S9 and S18. The residue at position 19 (Y19) is a Phosphotyrosine. Positions 19-22 match the Endocytosis signal motif; sequence YTRF. Phosphothreonine is present on T20. S23 is subject to Phosphoserine. The Stop-transfer sequence signature appears at 60–63; the sequence is KPKR. The helical; Signal-anchor for type II membrane protein transmembrane segment at 68–88 threads the bilayer; that stretch reads FCYAVIAVIIFFLIGFMIGYL. C69 carries the S-palmitoyl cysteine lipid modification. Topologically, residues 89 to 767 are extracellular; the sequence is GYCKRVEPKS…GDIWDIDNEF (679 aa). Basic and acidic residues predominate over residues 96 to 110; sequence PKSECGRSGDSKEIE. The tract at residues 96 to 122 is disordered; that stretch reads PKSECGRSGDSKEIEGTEPPETEEYFP. Residues 111-121 show a composition bias toward acidic residues; the sequence is GTEPPETEEYF. N211, N258, and N324 each carry an N-linked (GlcNAc...) asparagine glycan. Positions 230-320 constitute a PA domain; it reads SKATTVTGKL…GTGDPYTPGF (91 aa). Residues 576-767 form a ligand-binding region; the sequence is TMDTYEVLSQ…GDIWDIDNEF (192 aa). Residues 653–655 carry the Cell attachment site motif; that stretch reads RGD. N734 is a glycosylation site (N-linked (GlcNAc...) asparagine).

This sequence belongs to the peptidase M28 family. M28B subfamily. In terms of assembly, homodimer; disulfide-linked. Binds one transferrin or HFE molecule per subunit. Interacts with SH3BP4. Interacts with STEAP3; facilitates TFRC endocytosis in erythroid precursor cells. Post-translationally, stearoylated by ZDHHC6 which inhibits TFRC-mediated activation of the JNK pathway and promotes mitochondrial fragmentation. Stearoylation does not affect iron uptake.

The protein resides in the cell membrane. It localises to the melanosome. Its function is as follows. Cellular uptake of iron occurs via receptor-mediated endocytosis of ligand-occupied transferrin receptor into specialized endosomes. Endosomal acidification leads to iron release. The apotransferrin-receptor complex is then recycled to the cell surface with a return to neutral pH and the concomitant loss of affinity of apotransferrin for its receptor. Transferrin receptor is necessary for development of erythrocytes and the nervous system. Positively regulates T and B cell proliferation through iron uptake. Acts as a lipid sensor that regulates mitochondrial fusion by regulating activation of the JNK pathway. When dietary levels of stearate (C18:0) are low, promotes activation of the JNK pathway, resulting in HUWE1-mediated ubiquitination and subsequent degradation of the mitofusin MFN2 and inhibition of mitochondrial fusion. When dietary levels of stearate (C18:0) are high, TFRC stearoylation inhibits activation of the JNK pathway and thus degradation of the mitofusin MFN2. Mediates uptake of NICOL1 into fibroblasts where it may regulate extracellular matrix production. The sequence is that of Transferrin receptor protein 1 (TFRC) from Equus caballus (Horse).